A 459-amino-acid polypeptide reads, in one-letter code: Chaperone SurA (459 aa).

The first 23 residues, 1 to 23, serve as a signal peptide directing secretion; the sequence is MNHRLVALSVASLALLAPLTVPA. PpiC domains are found at residues 197–301 and 312–411; these read VQQI…KVLE and VTQS…QLME.

It is found in the periplasm. The enzyme catalyses [protein]-peptidylproline (omega=180) = [protein]-peptidylproline (omega=0). Chaperone involved in the correct folding and assembly of outer membrane proteins. Recognizes specific patterns of aromatic residues and the orientation of their side chains, which are found more frequently in integral outer membrane proteins. May act in both early periplasmic and late outer membrane-associated steps of protein maturation. This Albidiferax ferrireducens (strain ATCC BAA-621 / DSM 15236 / T118) (Rhodoferax ferrireducens) protein is Chaperone SurA.